We begin with the raw amino-acid sequence, 125 residues long: uncharacterized protein (125 aa).

A run of 2 helical transmembrane segments spans residues 22 to 44 and 54 to 73; these read TPLM…NAAV and YMGI…SVLM.

This sequence belongs to the bacteriophage holin family. Cp-1 holin subfamily.

It localises to the cell membrane. This is an uncharacterized protein from Clostridium acetobutylicum (strain ATCC 824 / DSM 792 / JCM 1419 / IAM 19013 / LMG 5710 / NBRC 13948 / NRRL B-527 / VKM B-1787 / 2291 / W).